Reading from the N-terminus, the 372-residue chain is MESGIDLQGQFISALQSLGLSHDLAKLLWLPLPMLMMLIVATVGVLVAVWLERKISAAVQQRIGPEYIGPLGILAPLADGLKLIFKEDVLPANSDRWLFTLGPAVVVIPVFLSYIIVPFGQNLLISNLAMGVFLWIALSSIAPIGLLMAGYASNNKYSLLGGLRAAAQSISYEIPLALAVLAVAMMSNGLGTVEIVEQQSQYGILSWNVWRQPIGFLVFWIAALAECERLPFDLPEAEEELVAGYQTEYAGMKFALFYLGAYVNLVLSALLVSVLYFGGWSFPIPLETIANLLGVSETNPFLQIAFAVLGITMTLIKAYFFVFLAILLRWTVPRVRIDQLLDLGWKFLLPVGLVNLLLTAGLKLAFPVAFGG.

The next 9 membrane-spanning stretches (helical) occupy residues 27–47, 65–85, 97–117, 128–148, 176–196, 204–224, 254–274, 308–328, and 347–367; these read LLWLPLPMLMMLIVATVGVLV, PEYIGPLGILAPLADGLKLIF, WLFTLGPAVVVIPVFLSYIIV, LAMGVFLWIALSSIAPIGLLM, LALAVLAVAMMSNGLGTVEIV, ILSWNVWRQPIGFLVFWIAAL, FALFYLGAYVNLVLSALLVSV, VLGITMTLIKAYFFVFLAILL, and FLLPVGLVNLLLTAGLKLAFP.

This sequence belongs to the complex I subunit 1 family. In terms of assembly, NDH-1 is composed of at least 11 different subunits.

Its subcellular location is the cellular thylakoid membrane. It carries out the reaction a plastoquinone + NADH + (n+1) H(+)(in) = a plastoquinol + NAD(+) + n H(+)(out). The enzyme catalyses a plastoquinone + NADPH + (n+1) H(+)(in) = a plastoquinol + NADP(+) + n H(+)(out). Its function is as follows. NDH-1 shuttles electrons from an unknown electron donor, via FMN and iron-sulfur (Fe-S) centers, to quinones in the respiratory and/or the photosynthetic chain. The immediate electron acceptor for the enzyme in this species is believed to be plastoquinone. Couples the redox reaction to proton translocation, and thus conserves the redox energy in a proton gradient. This chain is NAD(P)H-quinone oxidoreductase subunit 1, found in Thermosynechococcus vestitus (strain NIES-2133 / IAM M-273 / BP-1).